The chain runs to 1037 residues: Ras guanine nucleotide exchange factor E (1037 aa).

Residues 5–35 adopt a coiled-coil conformation; it reads ECNNRIEYLQNKVLELESLNENLKGQLEYFQ. 8 disordered regions span residues 65-100, 114-150, 166-387, 414-437, 451-472, 602-628, 907-935, and 1004-1037; these read NNNN…TTNN, TNSN…ELSN, TTTT…PLSN, TVNM…LYHS, SSLS…LTNP, INSN…NQLE, NTTT…QQLN, and EKET…SFKS. Low complexity-rich tracts occupy residues 114–145 and 166–200; these read TNSN…NNSN and TTTT…NNNN. Over residues 229 to 239 the composition is skewed to polar residues; sequence PTSSRNSPTNK. Over residues 240–276 the composition is skewed to low complexity; that stretch reads SSPQFLSPLSKSPLSQSTQSTTVSSPSPSWTTTVPQS. Residues 282–300 are compositionally biased toward polar residues; sequence TIVQSKSPYSPDTNISNKL. Residues 318-360 show a composition bias toward low complexity; it reads SPSKNSPRSLNSNNNNSSATTSITTPPTTSTPTPTTSTTTTTT. A compositionally biased stretch (basic and acidic residues) spans 361–370; sequence TERRPEDRRS. 2 stretches are compositionally biased toward polar residues: residues 372–387 and 424–437; these read TSPF…PLSN and PRSN…LYHS. The N-terminal Ras-GEF domain occupies 496–694; it reads NGFIVKGGTI…NLKRLLTNDR (199 aa). The 278-residue stretch at 726–1003 folds into the Ras-GEF domain; that stretch reads DPTEIARQLT…YKLSLICEPK (278 aa). Residues 907 to 930 are compositionally biased toward low complexity; that stretch reads NTTTTTTTTTTTTTTNTTTSNNNN. The span at 1027–1037 shows a compositional bias: polar residues; that stretch reads SVTSLLNSFKS.

In terms of biological role, promotes the exchange of Ras-bound GDP by GTP. Seems to play a role in chemotaxis. This is Ras guanine nucleotide exchange factor E (gefE) from Dictyostelium discoideum (Social amoeba).